The chain runs to 697 residues: Elongation factor G (697 aa).

The 280-residue stretch at 8-287 folds into the tr-type G domain; it reads ERVRNIGIAA…AVVDYLPAPT (280 aa). GTP is bound by residues 17 to 24, 81 to 85, and 135 to 138; these read AHIDAGKT, DTPGH, and NKMD.

It belongs to the TRAFAC class translation factor GTPase superfamily. Classic translation factor GTPase family. EF-G/EF-2 subfamily.

The protein resides in the cytoplasm. Functionally, catalyzes the GTP-dependent ribosomal translocation step during translation elongation. During this step, the ribosome changes from the pre-translocational (PRE) to the post-translocational (POST) state as the newly formed A-site-bound peptidyl-tRNA and P-site-bound deacylated tRNA move to the P and E sites, respectively. Catalyzes the coordinated movement of the two tRNA molecules, the mRNA and conformational changes in the ribosome. The polypeptide is Elongation factor G (fusA) (Arthrospira platensis (Spirulina platensis)).